A 707-amino-acid polypeptide reads, in one-letter code: Matrix metalloproteinase-9 (707 aa).

A signal peptide spans 1-19 (MSLWQPLVLVLLVLGCCFA). The propeptide at 20 to 93 (APRQRQSTLV…GELDSATLKA (74 aa)) is activation peptide. The N-linked (GlcNAc...) asparagine glycan is linked to asparagine 38. Residues 97–104 (PRCGVPDL) carry the Cysteine switch motif. Position 99 (cysteine 99) interacts with Zn(2+). Residues asparagine 120 and asparagine 127 are each glycosylated (N-linked (GlcNAc...) asparagine). Residues aspartate 131 and aspartate 165 each coordinate Ca(2+). Zn(2+) contacts are provided by histidine 175 and aspartate 177. 4 residues coordinate Ca(2+): aspartate 182, glycine 183, aspartate 185, and leucine 187. Histidine 190 contacts Zn(2+). Ca(2+) is bound by residues glycine 197, glutamine 199, and aspartate 201. Histidine 203 is a Zn(2+) binding site. Positions 205, 206, and 208 each coordinate Ca(2+). 3 consecutive Fibronectin type-II domains span residues 225-273 (ADGA…FCPS), 283-331 (ADGK…FCPT), and 342-390 (SAGE…FCPD). 6 cysteine pairs are disulfide-bonded: cysteine 230-cysteine 256, cysteine 244-cysteine 271, cysteine 288-cysteine 314, cysteine 302-cysteine 329, cysteine 347-cysteine 373, and cysteine 361-cysteine 388. Histidine 401 is a Zn(2+) binding site. Glutamate 402 is a catalytic residue. 2 residues coordinate Zn(2+): histidine 405 and histidine 411. The tract at residues 431-508 (LHKDDVNGIR…AGPSTATTVP (78 aa)) is disordered. 2 stretches are compositionally biased toward pro residues: residues 452-475 (RPPT…PPTV) and 486-499 (TGPP…PPTA). Cysteine 516 and cysteine 704 form a disulfide bridge. 4 Hemopexin repeats span residues 518–563 (VNIF…WPAL), 564–608 (PRKL…GLGA), 610–657 (VAQV…FPGV), and 658–704 (PLDT…ILQC).

The protein belongs to the peptidase M10A family. In terms of assembly, exists as monomer or homodimer; disulfide-linked. Also exists as heterodimer with LCN2. Macrophages and transformed cell lines produce only the monomeric form. Interacts with ECM1. As to quaternary structure, (Microbial infection) Interacts with Staphylococcus aureus protein SSL5; this interaction inhibits MMP9 activity. The cofactor is Zn(2+). It depends on Ca(2+) as a cofactor. Processing of the precursor yields different active forms of 64, 67 and 82 kDa. Sequentially processing by MMP3 yields the 82 kDa matrix metalloproteinase-9. Post-translationally, N- and O-glycosylated. Detected in neutrophils (at protein level). Produced by normal alveolar macrophages and granulocytes.

Its subcellular location is the secreted. The protein localises to the extracellular space. The protein resides in the extracellular matrix. It catalyses the reaction Cleavage of gelatin types I and V and collagen types IV and V.. Inhibited by histatin-3 1/24 (histatin-5). Inhibited by ECM1. Functionally, matrix metalloproteinase that plays an essential role in local proteolysis of the extracellular matrix and in leukocyte migration. Could play a role in bone osteoclastic resorption. Cleaves KiSS1 at a Gly-|-Leu bond. Cleaves NINJ1 to generate the Secreted ninjurin-1 form. Cleaves type IV and type V collagen into large C-terminal three quarter fragments and shorter N-terminal one quarter fragments. Degrades fibronectin but not laminin or Pz-peptide. This chain is Matrix metalloproteinase-9 (MMP9), found in Homo sapiens (Human).